Reading from the N-terminus, the 37-residue chain is Large ribosomal subunit protein bL36 (37 aa).

Belongs to the bacterial ribosomal protein bL36 family.

The sequence is that of Large ribosomal subunit protein bL36 from Synechococcus sp. (strain CC9605).